Here is a 167-residue protein sequence, read N- to C-terminus: MEFTAKANFVRVSPQKARLVLDLIKGQRVEDALNTLLFTKKGIAPAIYKLVHSAMDNANYLSNEKGLDLDLDRLYVKKAIANDGPRMKRIRPAPMGRAFRYQRRISHIEISLAEKPGFQGSTATTVEDEAPKAKGAKGAKAKKAPAKKAAAKKAPAKKFAGKKTAKR.

A disordered region spans residues 120–167; the sequence is GSTATTVEDEAPKAKGAKGAKAKKAPAKKAAAKKAPAKKFAGKKTAKR. Positions 134 to 167 are enriched in basic residues; the sequence is KGAKGAKAKKAPAKKAAAKKAPAKKFAGKKTAKR.

It belongs to the universal ribosomal protein uL22 family. In terms of assembly, part of the 50S ribosomal subunit.

This protein binds specifically to 23S rRNA; its binding is stimulated by other ribosomal proteins, e.g. L4, L17, and L20. It is important during the early stages of 50S assembly. It makes multiple contacts with different domains of the 23S rRNA in the assembled 50S subunit and ribosome. In terms of biological role, the globular domain of the protein is located near the polypeptide exit tunnel on the outside of the subunit, while an extended beta-hairpin is found that lines the wall of the exit tunnel in the center of the 70S ribosome. This chain is Large ribosomal subunit protein uL22, found in Koribacter versatilis (strain Ellin345).